The following is a 699-amino-acid chain: eEF1A lysine and N-terminal methyltransferase (699 aa).

Residue Met-1 is modified to N-acetylmethionine. A Phosphoserine modification is found at Ser-267. The tract at residues 433 to 459 (VSHKAQKKRKKDRKKQRPADAEDLPAA) is disordered. Basic residues predominate over residues 436–448 (KAQKKRKKDRKKQ).

It belongs to the methyltransferase superfamily. As to quaternary structure, forms a tripartite complex containing GAB1, METTL13 and SPRY2. Within the complex interacts with GAB1 and SPRY2.

The protein localises to the cytoplasm. It localises to the nucleus. It is found in the mitochondrion. It catalyses the reaction L-lysyl-[protein] + S-adenosyl-L-methionine = N(6)-methyl-L-lysyl-[protein] + S-adenosyl-L-homocysteine + H(+). It carries out the reaction N(6)-methyl-L-lysyl-[protein] + S-adenosyl-L-methionine = N(6),N(6)-dimethyl-L-lysyl-[protein] + S-adenosyl-L-homocysteine + H(+). The enzyme catalyses N-terminal glycyl-L-lysyl-L-glutamyl-[protein] + 3 S-adenosyl-L-methionine = N-terminal N,N,N-trimethyl-glycyl-L-lysyl-L-glutamyl-[protein] + 3 S-adenosyl-L-homocysteine + 3 H(+). Its activity is regulated as follows. Protein N-terminal methyltransferase activity is inhibited by GTP and GDP. In terms of biological role, dual methyltransferase that catalyzes methylation of elongation factor 1-alpha (EEF1A1 and EEF1A2) at two different positions, and is therefore involved in the regulation of mRNA translation. Via its C-terminus, methylates EEF1A1 and EEF1A2 at the N-terminal residue 'Gly-2'. Via its N-terminus dimethylates EEF1A1 and EEF1A2 at residue 'Lys-55'. Has no activity towards core histones H2A, H2B, H3 and H4. The sequence is that of eEF1A lysine and N-terminal methyltransferase from Homo sapiens (Human).